We begin with the raw amino-acid sequence, 421 residues long: UDP-N-acetylglucosamine 1-carboxyvinyltransferase (421 aa).

22–23 (KN) serves as a coordination point for phosphoenolpyruvate. Arg-92 is a binding site for UDP-N-acetyl-alpha-D-glucosamine. Cys-116 serves as the catalytic Proton donor. At Cys-116 the chain carries 2-(S-cysteinyl)pyruvic acid O-phosphothioketal. UDP-N-acetyl-alpha-D-glucosamine-binding residues include Asp-306 and Val-328.

The protein belongs to the EPSP synthase family. MurA subfamily.

It localises to the cytoplasm. It catalyses the reaction phosphoenolpyruvate + UDP-N-acetyl-alpha-D-glucosamine = UDP-N-acetyl-3-O-(1-carboxyvinyl)-alpha-D-glucosamine + phosphate. Its pathway is cell wall biogenesis; peptidoglycan biosynthesis. Cell wall formation. Adds enolpyruvyl to UDP-N-acetylglucosamine. This is UDP-N-acetylglucosamine 1-carboxyvinyltransferase from Thermotoga petrophila (strain ATCC BAA-488 / DSM 13995 / JCM 10881 / RKU-1).